A 380-amino-acid chain; its full sequence is MLIVADENIPLLDAFFEGFGEIRRYPGRSMDAASVKEADVLLVRSVTKVDRQLLEGSRVRFVGTCTIGTDHLDLDYFAEAGIHWSSAPGCNARGVVDYVLGSLLTLADLDGAALPQRTYGVVGAGEVGGRLVRVLHGMGWKVLVCDPLRQAAEGGDFVSLQTVLEQCDVISLHTPLQQGGEHPTWHLLGQAQLAQLRPGAWLINASRGPVVDNLALRELLLDREDVHAVLDVWEGEPQVDLQLADLCTLATPHIAGYSLDGRQRGTAQIYQALCRFLGEAERVQLQDLLPKPPLAQIEFDGEADLGWALATLCRAVYDPRRDDADFRRSLSDDAAEQRAAFDLLRKQYPPRREIEGLAVRLRGEAPQLVQMVNALGAVVV.

The substrate site is built by serine 45 and threonine 66. NAD(+) is bound by residues aspartate 146, threonine 174, 205–207, and aspartate 231; that span reads ASR. Arginine 207 is a catalytic residue. Glutamate 236 is an active-site residue. Histidine 253 (proton donor) is an active-site residue. NAD(+) is bound at residue glycine 256. A substrate-binding site is contributed by tyrosine 257.

It belongs to the D-isomer specific 2-hydroxyacid dehydrogenase family. PdxB subfamily. In terms of assembly, homodimer.

The protein resides in the cytoplasm. It carries out the reaction 4-phospho-D-erythronate + NAD(+) = (R)-3-hydroxy-2-oxo-4-phosphooxybutanoate + NADH + H(+). The protein operates within cofactor biosynthesis; pyridoxine 5'-phosphate biosynthesis; pyridoxine 5'-phosphate from D-erythrose 4-phosphate: step 2/5. Catalyzes the oxidation of erythronate-4-phosphate to 3-hydroxy-2-oxo-4-phosphonooxybutanoate. This chain is Erythronate-4-phosphate dehydrogenase, found in Pseudomonas putida (strain W619).